A 172-amino-acid chain; its full sequence is CD-NTase-associated protein 7 (172 aa).

The interval 141–172 is required for binding to CdnC and to confer phage immunity; sequence AQSPGINGYLENDKTYSAGGRSLTRTSVRNFV.

It belongs to the bacterial HORMA family. HORMA1 subfamily. In terms of assembly, forms complexes with CdnC with 1:1 and 2:2 stoichimetry, and a 1:1:6 CdnC:Cap7:Cap6 complex.

In terms of biological role, sensor protein of a CBASS antivirus system. CBASS (cyclic oligonucleotide-based antiphage signaling system) provides immunity against bacteriophage. The CD-NTase protein synthesizes cyclic nucleotides in response to infection; these serve as specific second messenger signals. The signals activate a diverse range of effectors, leading to bacterial cell death and thus abortive phage infection. A type III-C(AAA) CBASS system. Functionally, binds to a closure peptide (consensus His-Xaa-Xaa-Ile-Leu-Leu-Thr), which allows it to activate CdnC for second messenger synthesis. Its function is as follows. Protects E.coli strain JP313 against bacteriophage lambda cI- infection. When the cdnC-cap7-cap6-nucC operon is transformed into a susceptible strain it confers bacteriophage immunity. Mutations in the sensor (Cap7 also called HORMA) or effector proteins (CdnC, NucC) but not the disassembly protein (Cap6 also called Trip13) no longer confer immunity. The presence of the intact operon leads to culture collapse and cell death, which occurs before the phage has finished its replication cycle, thus protecting non-infected bacteria by aborting the phage infection and preventing its propagation. This chain is CD-NTase-associated protein 7, found in Escherichia coli (strain MS 115-1).